We begin with the raw amino-acid sequence, 35 residues long: 3-hydroxyisobutyrate dehydrogenase (35 aa).

4-33 (TPVGFIGLGNMGNPMAKNLMKHGYPLIIYD) is an NAD(+) binding site. N6-acetyllysine; alternate is present on Lys24. Position 24 is an N6-succinyllysine; alternate (Lys24).

It belongs to the HIBADH-related family. 3-hydroxyisobutyrate dehydrogenase subfamily. As to quaternary structure, homodimer.

Its subcellular location is the mitochondrion. It catalyses the reaction 3-hydroxy-2-methylpropanoate + NAD(+) = 2-methyl-3-oxopropanoate + NADH + H(+). Its pathway is amino-acid degradation; L-valine degradation. This is 3-hydroxyisobutyrate dehydrogenase (HIBADH) from Oryctolagus cuniculus (Rabbit).